Here is a 458-residue protein sequence, read N- to C-terminus: UDP-glycosyltransferase 76G1 (458 aa).

Catalysis depends on His-25, which acts as the Proton acceptor. Residue His-25 participates in rebaudioside A binding. His-25 contributes to the rubusoside binding site. Asn-27 contacts UDP. Asp-124 serves as the catalytic Charge relay. Residues 146-147 and His-155 contribute to the rebaudioside A site; that span reads TS. Residues Ser-283, 338 to 339, and 356 to 364 contribute to the UDP site; these read WV and HSGWNSTLE. Rebaudioside A contacts are provided by residues Trp-359 and 380–381; that span reads DQ.

This sequence belongs to the UDP-glycosyltransferase family. As to quaternary structure, monomer.

The catalysed reaction is steviolbioside + UDP-alpha-D-glucose = rebaudioside B + UDP + H(+). It carries out the reaction stevioside + UDP-alpha-D-glucose = rebaudioside A + UDP + H(+). It catalyses the reaction rebaudioside E + UDP-alpha-D-glucose = rebaudioside D + UDP + H(+). The enzyme catalyses rebaudioside D + UDP-alpha-D-glucose = rebaudioside M + UDP + H(+). Involved in the biosynthesis of steviol glycosides in leaves. Converts the di-glycoside steviolbioside to the tri-glycoside rebaudioside B. Converts the tri-glycoside stevioside to the tetra-glycoside rebaudioside A. Converts the tetra-glycoside rebaudioside E to the penta-glycoside rebaudioside D. Converts the penta-glycoside rebaudioside D to the hexa-glycoside rebaudioside M. Can glucosylate rubusoside and rebaudioside A in vitro. This is UDP-glycosyltransferase 76G1 from Stevia rebaudiana (Stevia).